Consider the following 614-residue polypeptide: Inactive leucine-rich repeat receptor-like serine/threonine-protein kinase At5g24100 (614 aa).

An N-terminal signal peptide occupies residues 1–21 (MSRGRSFIFYFVLFLFFGSSA). At 22–251 (LYSQVTGDLA…KNGIYISEPA (230 aa)) the chain is on the extracellular side. N-linked (GlcNAc...) asparagine glycosylation is present at Asn53. LRR repeat units lie at residues 71 to 95 (GTRVTALHLPGASLLGVIPPGTISR), 96 to 120 (LSELQILSLRSNGLRGPFPIDFLQL), 121 to 146 (KKLKAISLGNNRFSGPLPSDYATWTN), 148 to 167 (TVLDLYSNRFNGSIPAGFAN), 168 to 190 (LTGLVSLNLAKNSFSGEIPDLNL), and 191 to 214 (PGLRRLNFSNNNLTGSIPNSLKRF). Residues Asn146, Asn158, and Asn167 are each glycosylated (N-linked (GlcNAc...) asparagine). N-linked (GlcNAc...) asparagine glycosylation is found at Asn197 and Asn202. A helical transmembrane segment spans residues 252-272 (ILGIAISVCFVIFFVIAVVII). Residues 273–614 (VCYVKRQRKS…VETLEEIERD (342 aa)) are Cytoplasmic-facing. The Protein kinase domain maps to 341-611 (IASAEFLGKG…VKVVETLEEI (271 aa)). Position 343 is a phosphoserine (Ser343). Residues 347-355 (LGKGVFGMT) and Lys369 each bind ATP. A Phosphoserine modification is found at Ser420. Phosphothreonine occurs at positions 441, 514, and 591. The LRR 7 repeat unit spans residues 578–601 (AKLLQMLQLGTSCTAMVPAKRPDM).

The protein belongs to the protein kinase superfamily. Ser/Thr protein kinase family.

The protein localises to the cell membrane. The sequence is that of Inactive leucine-rich repeat receptor-like serine/threonine-protein kinase At5g24100 from Arabidopsis thaliana (Mouse-ear cress).